Here is a 362-residue protein sequence, read N- to C-terminus: Dihydroorotate dehydrogenase (quinone) (362 aa).

FMN contacts are provided by residues 62–66 (AGYDK) and Thr86. Lys66 lines the substrate pocket. Position 111-115 (111-115 (NRLGF)) interacts with substrate. Residues Asn139 and Asn170 each coordinate FMN. Asn170 is a substrate binding site. Catalysis depends on Ser173, which acts as the Nucleophile. Asn175 serves as a coordination point for substrate. Residues Lys215 and Ser243 each contribute to the FMN site. 244 to 245 (NT) serves as a coordination point for substrate. Residues Gly266, Gly295, and 316 to 317 (YS) contribute to the FMN site.

The protein belongs to the dihydroorotate dehydrogenase family. Type 2 subfamily. As to quaternary structure, monomer. FMN is required as a cofactor.

The protein localises to the cell membrane. It carries out the reaction (S)-dihydroorotate + a quinone = orotate + a quinol. The protein operates within pyrimidine metabolism; UMP biosynthesis via de novo pathway; orotate from (S)-dihydroorotate (quinone route): step 1/1. Functionally, catalyzes the conversion of dihydroorotate to orotate with quinone as electron acceptor. This is Dihydroorotate dehydrogenase (quinone) from Rhizobium etli (strain CIAT 652).